Consider the following 342-residue polypeptide: Heat-inducible transcription repressor HrcA (342 aa).

Belongs to the HrcA family.

Its function is as follows. Negative regulator of class I heat shock genes (grpE-dnaK-dnaJ and groELS operons). Prevents heat-shock induction of these operons. This chain is Heat-inducible transcription repressor HrcA, found in Leptospira interrogans serogroup Icterohaemorrhagiae serovar copenhageni (strain Fiocruz L1-130).